Consider the following 324-residue polypeptide: Probable tRNA pseudouridine synthase B (324 aa).

The Nucleophile role is filled by aspartate 72. The PUA domain occupies 239–314; that stretch reads LPRVVILDSA…LVIETRKVFM (76 aa).

Belongs to the pseudouridine synthase TruB family. Type 2 subfamily.

The catalysed reaction is uridine(55) in tRNA = pseudouridine(55) in tRNA. Its function is as follows. Could be responsible for synthesis of pseudouridine from uracil-55 in the psi GC loop of transfer RNAs. This is Probable tRNA pseudouridine synthase B from Methanothermobacter thermautotrophicus (strain ATCC 29096 / DSM 1053 / JCM 10044 / NBRC 100330 / Delta H) (Methanobacterium thermoautotrophicum).